We begin with the raw amino-acid sequence, 197 residues long: Allatostatins (197 aa).

The N-terminal stretch at 1–27 (MRSRTSVLTSSLAFLYFFGIVGRSALA) is a signal peptide. Residues 28 to 56 (MEETPASSMNLQHYNNMLNPMVFDDTMPE) constitute a propeptide that is removed on maturation. At isoleucine 76 the chain carries Isoleucine amide. A propeptide spanning residues 80–86 (WIDTNDN) is cleaved from the precursor. 4 positions are modified to leucine amide: leucine 96, leucine 106, leucine 154, and leucine 184. Positions 161–197 (YSGGQPLGSKRPNDMLSQRYHFGLGKRMSEDEEESSQ) are disordered. A propeptide spanning residues 188–197 (MSEDEEESSQ) is cleaved from the precursor.

Belongs to the allatostatin family.

The protein localises to the secreted. Neuropeptides. The sequence is that of Allatostatins from Apis mellifera (Honeybee).